Reading from the N-terminus, the 288-residue chain is Elongation factor Ts (288 aa).

The involved in Mg(2+) ion dislocation from EF-Tu stretch occupies residues 82–85; the sequence is TDFV.

The protein belongs to the EF-Ts family.

Its subcellular location is the cytoplasm. In terms of biological role, associates with the EF-Tu.GDP complex and induces the exchange of GDP to GTP. It remains bound to the aminoacyl-tRNA.EF-Tu.GTP complex up to the GTP hydrolysis stage on the ribosome. This Chlorobium luteolum (strain DSM 273 / BCRC 81028 / 2530) (Pelodictyon luteolum) protein is Elongation factor Ts.